Consider the following 256-residue polypeptide: DNA repair protein RecO (256 aa).

The protein belongs to the RecO family.

Functionally, involved in DNA repair and RecF pathway recombination. The protein is DNA repair protein RecO of Clostridium novyi (strain NT).